Reading from the N-terminus, the 448-residue chain is UDP-N-acetylmuramoylalanine--D-glutamate ligase (448 aa).

112 to 118 lines the ATP pocket; it reads GSNAKST.

The protein belongs to the MurCDEF family.

It localises to the cytoplasm. The catalysed reaction is UDP-N-acetyl-alpha-D-muramoyl-L-alanine + D-glutamate + ATP = UDP-N-acetyl-alpha-D-muramoyl-L-alanyl-D-glutamate + ADP + phosphate + H(+). Its pathway is cell wall biogenesis; peptidoglycan biosynthesis. In terms of biological role, cell wall formation. Catalyzes the addition of glutamate to the nucleotide precursor UDP-N-acetylmuramoyl-L-alanine (UMA). The protein is UDP-N-acetylmuramoylalanine--D-glutamate ligase of Acinetobacter baumannii (strain AB307-0294).